The sequence spans 216 residues: L-fuculose phosphate aldolase (216 aa).

Residues 28–29 (GN), 43–44 (TG), and 71–72 (SS) contribute to the substrate site. Glu-73 acts as the Proton donor/acceptor in catalysis. The Zn(2+) site is built by Glu-73, His-92, His-94, and His-155.

This sequence belongs to the aldolase class II family. AraD/FucA subfamily. Homotetramer. Requires Zn(2+) as cofactor.

It carries out the reaction L-fuculose 1-phosphate = (S)-lactaldehyde + dihydroxyacetone phosphate. The protein operates within carbohydrate degradation; L-fucose degradation; L-lactaldehyde and glycerone phosphate from L-fucose: step 3/3. Involved in the degradation of L-fucose and D-arabinose. Catalyzes the reversible cleavage of L-fuculose 1-phosphate (Fuc1P) to yield dihydroxyacetone phosphate (DHAP) and L-lactaldehyde. The polypeptide is L-fuculose phosphate aldolase (Haemophilus influenzae (strain ATCC 51907 / DSM 11121 / KW20 / Rd)).